The sequence spans 1648 residues: Pleiotropic ABC efflux transporter of multiple drugs YBT1 (1648 aa).

A helical membrane pass occupies residues 28 to 48; sequence NYVPTTLVTISILILLHNFFI. A glycan (N-linked (GlcNAc...) asparagine) is linked at N72. The next 4 membrane-spanning stretches (helical) occupy residues 140–160, 175–195, 207–227, and 250–270; these read VVIE…LSIE, PHVL…LNLN, NIWL…ILPF, and LNLV…LPVL. N-linked (GlcNAc...) asparagine glycosylation occurs at N306. Helical transmembrane passes span 352-372 and 392-412; these read FLNL…SIFV and MNLA…VAIC. The region spanning 361–674 is the ABC transmembrane type-1 1 domain; sequence CFTTISAFSI…ISDMLSYLIQ (314 aa). The N-linked (GlcNAc...) asparagine glycan is linked to N471. The next 2 membrane-spanning stretches (helical) occupy residues 501–521 and 523–543; these read ISEL…LTVS and ILLY…TIII. N-linked (GlcNAc...) asparagine glycosylation is present at N573. The next 2 membrane-spanning stretches (helical) occupy residues 612-632 and 643-662; these read VWCV…GCTF and LTTP…RDPL. The ABC transporter 1 domain maps to 706-947; that stretch reads LAFENVTLRW…GLLGEDENMK (242 aa). N-linked (GlcNAc...) asparagine glycosylation is present at N710. 741 to 748 is an ATP binding site; it reads GATGSGKT. 2 N-linked (GlcNAc...) asparagine glycosylation sites follow: N784 and N798. Residues 1012 to 1032 form a helical membrane-spanning segment; it reads MYGGWYTIVALASVFTAILCL. The ABC transmembrane type-1 2 domain occupies 1032–1333; the sequence is LQITQAWWIR…LVRQYSELEM (302 aa). Residue N1042 is glycosylated (N-linked (GlcNAc...) asparagine). The next 3 helical transmembrane spans lie at 1089–1109, 1168–1188, and 1191–1211; these read IAKF…IGSI, IQSV…ISYI, and AFFP…FFYL. N-linked (GlcNAc...) asparagine glycosylation is present at N1255. The next 2 membrane-spanning stretches (helical) occupy residues 1282-1302 and 1305-1325; these read LIGA…INNI and GLAG…LWLV. In terms of domain architecture, ABC transporter 2 spans 1372–1622; that stretch reads VEVNNLSLKY…KKSIFYNMCE (251 aa). N1376 carries an N-linked (GlcNAc...) asparagine glycan. Residue 1406 to 1413 participates in ATP binding; it reads GRTGAGKS. N1503, N1524, and N1573 each carry an N-linked (GlcNAc...) asparagine glycan.

The protein belongs to the ABC transporter superfamily. ABCC family. Conjugate transporter (TC 3.A.1.208) subfamily.

The protein resides in the membrane. Its function is as follows. Pleiotropic ABC efflux transporter that might be involved in the resistance to azoles such as fluconazole. The protein is Pleiotropic ABC efflux transporter of multiple drugs YBT1 of Candida glabrata (strain ATCC 2001 / BCRC 20586 / JCM 3761 / NBRC 0622 / NRRL Y-65 / CBS 138) (Yeast).